The sequence spans 207 residues: MSRYRGPRLRIIRRLRNLPGLTNKLVESKKNQVSGSDQSNQKKVSQYCIRLEAKQRLRFNYGLTERQLLNYVRIARCAKGSTGQILLQLLEMRLDNILFRLGVVPTIPSARQLINHRHILVNNRIVDIPSFHCKPKDIITIGAPKTYQSIITKRIESFAKDQIPDHLTLSLSEPKKPKGFVNYLINRESIGLKINELLVVEYYSRKA.

Residues 92–156 (MRLDNILFRL…YQSIITKRIE (65 aa)) enclose the S4 RNA-binding domain.

This sequence belongs to the universal ribosomal protein uS4 family. Part of the 30S ribosomal subunit. Contacts protein S5. The interaction surface between S4 and S5 is involved in control of translational fidelity.

The protein localises to the plastid. Its subcellular location is the chloroplast. In terms of biological role, one of the primary rRNA binding proteins, it binds directly to 16S rRNA where it nucleates assembly of the body of the 30S subunit. With S5 and S12 plays an important role in translational accuracy. This chain is Small ribosomal subunit protein uS4c (rps4), found in Equisetum pratense (Meadow horsetail).